A 158-amino-acid polypeptide reads, in one-letter code: NAD(P)H-quinone oxidoreductase subunit J, chloroplastic (158 aa).

The protein belongs to the complex I 30 kDa subunit family. In terms of assembly, NDH is composed of at least 16 different subunits, 5 of which are encoded in the nucleus.

The protein localises to the plastid. The protein resides in the chloroplast thylakoid membrane. It carries out the reaction a plastoquinone + NADH + (n+1) H(+)(in) = a plastoquinol + NAD(+) + n H(+)(out). The catalysed reaction is a plastoquinone + NADPH + (n+1) H(+)(in) = a plastoquinol + NADP(+) + n H(+)(out). NDH shuttles electrons from NAD(P)H:plastoquinone, via FMN and iron-sulfur (Fe-S) centers, to quinones in the photosynthetic chain and possibly in a chloroplast respiratory chain. The immediate electron acceptor for the enzyme in this species is believed to be plastoquinone. Couples the redox reaction to proton translocation, and thus conserves the redox energy in a proton gradient. This Nymphaea alba (White water-lily) protein is NAD(P)H-quinone oxidoreductase subunit J, chloroplastic.